A 274-amino-acid polypeptide reads, in one-letter code: uncharacterized protein (274 aa).

Residues 238-258 traverse the membrane as a helical segment; it reads ILSVQVIFATVIALIAISVFC.

It localises to the membrane. This is an uncharacterized protein from Schizosaccharomyces pombe (strain 972 / ATCC 24843) (Fission yeast).